The primary structure comprises 55 residues: Male-specific sperm protein Mst84Dc (55 aa).

The protein belongs to the MST(3)CGP family. As to expression, testis.

This chain is Male-specific sperm protein Mst84Dc (Mst84Dc), found in Drosophila melanogaster (Fruit fly).